Here is a 545-residue protein sequence, read N- to C-terminus: ATP synthase F(1) complex subunit alpha, mitochondrial (545 aa).

The ATP site is built by Q216, G218, K219, T220, and S221. T220 is a Mg(2+) binding site. D304 contacts Mg(2+). 2 residues coordinate ATP: Q465 and Q467.

The protein belongs to the ATPase alpha/beta chains family. As to quaternary structure, homotrimer. Component of the ATP synthase complex composed at least of ATP5F1A/subunit alpha, ATP5F1B/subunit beta, ATP5MC1/subunit c (homooctomer), MT-ATP6/subunit a, MT-ATP8/subunit 8, ATP5ME/subunit e, ATP5MF/subunit f, ATP5MG/subunit g, ATP5MK/subunit k, ATP5MJ/subunit j, ATP5F1C/subunit gamma, ATP5F1D/subunit delta, ATP5F1E/subunit epsilon, ATP5PF/subunit F6, ATP5PB/subunit b, ATP5PD/subunit d, ATP5PO/subunit OSCP. ATP synthase complex consists of a soluble F(1) head domain (subunits alpha(3) and beta(3)) - the catalytic core - and a membrane F(0) domain - the membrane proton channel (subunits c, a, 8, e, f, g, k and j). These two domains are linked by a central stalk (subunits gamma, delta, and epsilon) rotating inside the F1 region and a stationary peripheral stalk (subunits F6, b, d, and OSCP).

Its subcellular location is the mitochondrion inner membrane. Subunit alpha, of the mitochondrial membrane ATP synthase complex (F(1)F(0) ATP synthase or Complex V) that produces ATP from ADP in the presence of a proton gradient across the membrane which is generated by electron transport complexes of the respiratory chain. ATP synthase complex consist of a soluble F(1) head domain - the catalytic core - and a membrane F(1) domain - the membrane proton channel. These two domains are linked by a central stalk rotating inside the F(1) region and a stationary peripheral stalk. During catalysis, ATP synthesis in the catalytic domain of F(1) is coupled via a rotary mechanism of the central stalk subunits to proton translocation. In vivo, can only synthesize ATP although its ATP hydrolase activity can be activated artificially in vitro. With the catalytic subunit beta (ATP5F1B), forms the catalytic core in the F(1) domain. Subunit alpha does not bear the catalytic high-affinity ATP-binding sites. The protein is ATP synthase F(1) complex subunit alpha, mitochondrial of Xenopus laevis (African clawed frog).